The primary structure comprises 342 residues: Trans-3-hydroxy-L-proline dehydratase (342 aa).

The active-site Proton acceptor is the Ser90. Residues 91–92, Asp252, and 257–258 contribute to the substrate site; these read GS and GT.

Belongs to the proline racemase family.

It carries out the reaction trans-3-hydroxy-L-proline = 1-pyrroline-2-carboxylate + H2O. Functionally, catalyzes the dehydration of trans-3-hydroxy-L-proline (t3LHyp) to Delta(1)-pyrroline-2-carboxylate (Pyr2C). Is likely involved in a degradation pathway that converts t3LHyp to L-proline. Displays neither proline racemase activity nor 4-hydroxyproline 2-epimerase activity. In Allorhizobium ampelinum (strain ATCC BAA-846 / DSM 112012 / S4) (Agrobacterium vitis (strain S4)), this protein is Trans-3-hydroxy-L-proline dehydratase.